We begin with the raw amino-acid sequence, 215 residues long: uncharacterized protein (215 aa).

The protein belongs to the HAD-like hydrolase superfamily. CbbY/CbbZ/Gph/YieH family.

This is an uncharacterized protein from Lacticaseibacillus casei (Lactobacillus casei).